A 262-amino-acid polypeptide reads, in one-letter code: Nickel import ATP-binding protein NikD (262 aa).

An ABC transporter domain is found at 6–249 (LAIEGLTATT…PGHEVTRMLV (244 aa)). 42–49 (GASGSGKS) is an ATP binding site.

The protein belongs to the ABC transporter superfamily. Nickel importer (TC 3.A.1.5.3) family. The complex is composed of two ATP-binding proteins (NikD and NikE), two transmembrane proteins (NikB and NikC) and a solute-binding protein (NikA).

It localises to the cell inner membrane. The catalysed reaction is Ni(2+)(out) + ATP + H2O = Ni(2+)(in) + ADP + phosphate + H(+). Part of the ABC transporter complex NikABCDE involved in nickel import. Responsible for energy coupling to the transport system. In Brucella abortus biovar 1 (strain 9-941), this protein is Nickel import ATP-binding protein NikD.